Consider the following 87-residue polypeptide: Small ribosomal subunit protein bS20 (87 aa).

Residues 1-11 (MANIKSAKKRA) show a composition bias toward basic residues. The tract at residues 1 to 26 (MANIKSAKKRAVQSEKRRQHNASQRS) is disordered.

The protein belongs to the bacterial ribosomal protein bS20 family.

Functionally, binds directly to 16S ribosomal RNA. This chain is Small ribosomal subunit protein bS20, found in Actinobacillus pleuropneumoniae serotype 5b (strain L20).